The following is a 115-amino-acid chain: Promotilin (115 aa).

A signal peptide spans 1–25 (MVSRKAVAALLVVHAPAMLASQTEA). Positions 40–74 (EKERSKGQKKSLSVWQRSGEEGPVDPAEPIEEEGN) are disordered.

It belongs to the motilin family.

It is found in the secreted. Plays an important role in the regulation of interdigestive gastrointestinal motility and indirectly causes rhythmic contraction of duodenal and colonic smooth muscle. The polypeptide is Promotilin (MLN) (Macaca mulatta (Rhesus macaque)).